The following is a 245-amino-acid chain: Demethylmenaquinone methyltransferase (245 aa).

Residues threonine 70, aspartate 90, and 118 to 119 (DC) contribute to the S-adenosyl-L-methionine site.

It belongs to the class I-like SAM-binding methyltransferase superfamily. MenG/UbiE family.

The catalysed reaction is a 2-demethylmenaquinol + S-adenosyl-L-methionine = a menaquinol + S-adenosyl-L-homocysteine + H(+). It participates in quinol/quinone metabolism; menaquinone biosynthesis; menaquinol from 1,4-dihydroxy-2-naphthoate: step 2/2. In terms of biological role, methyltransferase required for the conversion of demethylmenaquinol (DMKH2) to menaquinol (MKH2). This chain is Demethylmenaquinone methyltransferase, found in Bacteroides fragilis (strain ATCC 25285 / DSM 2151 / CCUG 4856 / JCM 11019 / LMG 10263 / NCTC 9343 / Onslow / VPI 2553 / EN-2).